Here is a 98-residue protein sequence, read N- to C-terminus: Beta-elicitin cinnamomin (98 aa).

Cystine bridges form between Cys3–Cys71, Cys27–Cys56, and Cys51–Cys95. A Beak-like motif 1 (ligand binding) motif is present at residues 33-42 (YSMLTATALP). Positions 72-83 (DLTVPTSGLVLD) match the Beak-like motif 2 (ligand binding) motif.

Belongs to the elicitin family.

The protein localises to the secreted. Induces local and distal defense responses (incompatible hypersensitive reaction) in plants from the solanaceae and cruciferae families. Elicits leaf necrosis and causes the accumulation of pathogenesis-related proteins. Might interact with the lipidic molecules of the plasma membrane. Elicitins are able to load, carry, and transfer sterols between membranes. The protein is Beta-elicitin cinnamomin of Phytophthora cinnamomi (Cinnamon fungus).